The following is a 161-amino-acid chain: Cyclic pyranopterin monophosphate synthase (161 aa).

Substrate-binding positions include 75–77 (MCH) and 115–116 (ME). Aspartate 130 is a catalytic residue.

This sequence belongs to the MoaC family. In terms of assembly, homohexamer; trimer of dimers.

It catalyses the reaction (8S)-3',8-cyclo-7,8-dihydroguanosine 5'-triphosphate = cyclic pyranopterin phosphate + diphosphate. It participates in cofactor biosynthesis; molybdopterin biosynthesis. In terms of biological role, catalyzes the conversion of (8S)-3',8-cyclo-7,8-dihydroguanosine 5'-triphosphate to cyclic pyranopterin monophosphate (cPMP). This chain is Cyclic pyranopterin monophosphate synthase, found in Bacillus mycoides (strain KBAB4) (Bacillus weihenstephanensis).